The following is a 217-amino-acid chain: Glycerol-3-phosphate acyltransferase (217 aa).

Helical transmembrane passes span 3 to 23 (IVIL…VWIG), 56 to 76 (VLLM…LFGL), 78 to 98 (GVNP…PIFA), 120 to 140 (FFIY…MVSL), 142 to 162 (SMIS…TVPA), and 163 to 183 (ILPT…TFIF).

This sequence belongs to the PlsY family. As to quaternary structure, probably interacts with PlsX.

The protein localises to the cell membrane. The catalysed reaction is an acyl phosphate + sn-glycerol 3-phosphate = a 1-acyl-sn-glycero-3-phosphate + phosphate. Its pathway is lipid metabolism; phospholipid metabolism. Catalyzes the transfer of an acyl group from acyl-phosphate (acyl-PO(4)) to glycerol-3-phosphate (G3P) to form lysophosphatidic acid (LPA). This enzyme utilizes acyl-phosphate as fatty acyl donor, but not acyl-CoA or acyl-ACP. In Enterococcus faecalis (strain ATCC 700802 / V583), this protein is Glycerol-3-phosphate acyltransferase.